Here is a 62-residue protein sequence, read N- to C-terminus: Photosystem II reaction center protein Z (62 aa).

2 helical membrane passes run 8–28 (AVFASIAIPFIPVIGVPAVFA) and 41–61 (FSGATPRIGPVPLVGILNSSV).

Belongs to the PsbZ family. As to quaternary structure, PSII is composed of 1 copy each of membrane proteins PsbA, PsbB, PsbC, PsbD, PsbE, PsbF, PsbH, PsbI, PsbJ, PsbK, PsbL, PsbM, PsbT, PsbY, PsbZ, Psb30/Ycf12, at least 3 peripheral proteins of the oxygen-evolving complex and a large number of cofactors. It forms dimeric complexes.

The protein resides in the plastid. It is found in the chloroplast thylakoid membrane. In terms of biological role, may control the interaction of photosystem II (PSII) cores with the light-harvesting antenna, regulates electron flow through the 2 photosystem reaction centers. PSII is a light-driven water plastoquinone oxidoreductase, using light energy to abstract electrons from H(2)O, generating a proton gradient subsequently used for ATP formation. This is Photosystem II reaction center protein Z from Selaginella uncinata (Blue spike-moss).